A 69-amino-acid polypeptide reads, in one-letter code: Cytochrome c oxidase subunit 8A, mitochondrial (69 aa).

Residues 1–25 (MSVLTPLLLRGLTGPARRLPVPRAQ) constitute a mitochondrion transit peptide. The short motif at 2-19 (SVLTPLLLRGLTGPARRL) is the SIFI-degron element. Residues 26-36 (IHSKPPREQLG) are Mitochondrial matrix-facing. Residues 37–60 (TMDIAIGLTSCFLCFLLPSGWVLS) traverse the membrane as a helical segment. Topologically, residues 61-69 (HMENYKKRE) are mitochondrial intermembrane.

This sequence belongs to the cytochrome c oxidase VIII family. In terms of assembly, component of the cytochrome c oxidase (complex IV, CIV), a multisubunit enzyme composed of 14 subunits. The complex is composed of a catalytic core of 3 subunits MT-CO1, MT-CO2 and MT-CO3, encoded in the mitochondrial DNA, and 11 supernumerary subunits COX4I1 (or COX4I2), COX5A, COX5B, COX6A2 (or COX6A1), COX6B1 (or COX6B2), COX6C, COX7A1 (or COX7A2), COX7B, COX7C, COX8B and NDUFA4, which are encoded in the nuclear genome. The complex exists as a monomer or a dimer and forms supercomplexes (SCs) in the inner mitochondrial membrane with NADH-ubiquinone oxidoreductase (complex I, CI) and ubiquinol-cytochrome c oxidoreductase (cytochrome b-c1 complex, complex III, CIII), resulting in different assemblies (supercomplex SCI(1)III(2)IV(1) and megacomplex MCI(2)III(2)IV(2)). In terms of processing, in response to mitochondrial stress, the precursor protein is ubiquitinated by the SIFI complex in the cytoplasm before mitochondrial import, leading to its degradation. Within the SIFI complex, UBR4 initiates ubiquitin chain that are further elongated or branched by KCMF1.

It is found in the mitochondrion inner membrane. The protein operates within energy metabolism; oxidative phosphorylation. In terms of biological role, component of the cytochrome c oxidase, the last enzyme in the mitochondrial electron transport chain which drives oxidative phosphorylation. The respiratory chain contains 3 multisubunit complexes succinate dehydrogenase (complex II, CII), ubiquinol-cytochrome c oxidoreductase (cytochrome b-c1 complex, complex III, CIII) and cytochrome c oxidase (complex IV, CIV), that cooperate to transfer electrons derived from NADH and succinate to molecular oxygen, creating an electrochemical gradient over the inner membrane that drives transmembrane transport and the ATP synthase. Cytochrome c oxidase is the component of the respiratory chain that catalyzes the reduction of oxygen to water. Electrons originating from reduced cytochrome c in the intermembrane space (IMS) are transferred via the dinuclear copper A center (CU(A)) of subunit 2 and heme A of subunit 1 to the active site in subunit 1, a binuclear center (BNC) formed by heme A3 and copper B (CU(B)). The BNC reduces molecular oxygen to 2 water molecules using 4 electrons from cytochrome c in the IMS and 4 protons from the mitochondrial matrix. This is Cytochrome c oxidase subunit 8A, mitochondrial (COX8A) from Bos taurus (Bovine).